A 797-amino-acid polypeptide reads, in one-letter code: Protocadherin beta-9 (797 aa).

The N-terminal stretch at 1-26 (MKTRGFSFPRQRQVLFLFLFWGVSLA) is a signal peptide. The Extracellular segment spans residues 27-690 (GSGFGRYSVT…AQADSLTVYL (664 aa)). 5 consecutive Cadherin domains span residues 35-133 (VTEE…SPVF), 138-242 (MVLK…APQF), 247-347 (YETQ…PPEL), 352-451 (LSNS…APAF), and 456-561 (YTLF…SPFV). Residue asparagine 169 is glycosylated (N-linked (GlcNAc...) asparagine). Residue asparagine 418 is glycosylated (N-linked (GlcNAc...) asparagine). N-linked (GlcNAc...) asparagine glycosylation is present at asparagine 567. A Cadherin 6 domain is found at 568-671 (GSAPCTELVP…LVDGFSQPYL (104 aa)). A helical membrane pass occupies residues 691–711 (VVALASVSSLFLLSVLLFVAV). Residues 712 to 797 (RLCRRSRAAS…TLHNSFGFNY (86 aa)) are Cytoplasmic-facing.

The protein localises to the cell membrane. Functionally, potential calcium-dependent cell-adhesion protein. May be involved in the establishment and maintenance of specific neuronal connections in the brain. This Pan troglodytes (Chimpanzee) protein is Protocadherin beta-9 (PCDHB9).